The following is a 259-amino-acid chain: DNA-directed RNA polymerase 30 kDa polypeptide (259 aa).

Residues 155–195 (YNTPCPNCKSRNTTPMMIQTRAADEPPLVRHACRDCKQHFK) form a TFIIS-type zinc finger. Zn(2+) contacts are provided by Cys159, Cys162, Cys187, and Cys190. A disordered region spans residues 220-259 (EILPDNNPSPPESPEPASPIDDGLIRATFDRNDEPPEDDE). The segment covering 226–236 (NPSPPESPEPA) has biased composition (pro residues).

It belongs to the poxviridae DNA-directed RNA polymerase 30 kDa subunit family. In terms of assembly, the DNA-dependent RNA polymerase (vRNAP) consists of eight subunits encoded by early viral genes and termed according to their apparent molecular masses Rpo147, Rpo132, Rpo35, Rpo30, Rpo22, Rpo19, Rpo18, and Rpo7. The same holoenzyme, with the addition of the transcription-specificity factor RAP94, is used for early gene expression.

The protein resides in the virion. The protein localises to the host cytoplasm. It carries out the reaction RNA(n) + a ribonucleoside 5'-triphosphate = RNA(n+1) + diphosphate. Its function is as follows. Part of the DNA-dependent RNA polymerase which catalyzes the transcription of viral DNA into RNA using the four ribonucleoside triphosphates as substrates. Responsible for the transcription of early, intermediate and late genes. DNA-dependent RNA polymerase associates with the early transcription factor (ETF), itself composed of OPG118 and OPG134, thereby allowing the early genes transcription. Late transcription, and probably also intermediate transcription, require newly synthesized RNA polymerase. This Monkeypox virus protein is DNA-directed RNA polymerase 30 kDa polypeptide (OPG066).